The sequence spans 125 residues: MLLSLRKNNEFRTVYRRGKSYANDLLVLYVYPNRKNVTKDGERFNKVGVSVSKKVGKSVVRSRVKRLILENYRLNSSELKEGYDFVFIARVAINGKDFKQVGKAMNNLIKKAGLRDNEKIVHSND.

Belongs to the RnpA family. As to quaternary structure, consists of a catalytic RNA component (M1 or rnpB) and a protein subunit.

The catalysed reaction is Endonucleolytic cleavage of RNA, removing 5'-extranucleotides from tRNA precursor.. RNaseP catalyzes the removal of the 5'-leader sequence from pre-tRNA to produce the mature 5'-terminus. It can also cleave other RNA substrates such as 4.5S RNA. The protein component plays an auxiliary but essential role in vivo by binding to the 5'-leader sequence and broadening the substrate specificity of the ribozyme. This chain is Ribonuclease P protein component, found in Clostridium perfringens (strain ATCC 13124 / DSM 756 / JCM 1290 / NCIMB 6125 / NCTC 8237 / Type A).